We begin with the raw amino-acid sequence, 349 residues long: Putative transport protein YhhT (349 aa).

Residues 1-10 (METPQPDKTG) lie on the Cytoplasmic side of the membrane. A helical transmembrane segment spans residues 11–31 (MHILLKLASLVVILAGIHAAA). Residue Asp32 is a topological domain, periplasmic. A helical transmembrane segment spans residues 33–53 (IIVQLLLALFFAIVLNPLVTW). Topologically, residues 54–62 (FIRRGVQRP) are cytoplasmic. Residues 63–83 (VAITIVVVVMLIALTALVGVL) form a helical membrane-spanning segment. At 84–142 (AASFNEFISMLPKFNKELTRKLFKLQEMLPFLNLHMSPERMLQRMDSEKVVTFTTALMT) the chain is on the periplasmic side. A helical transmembrane segment spans residues 143-163 (GLSGAMASVLLLVMTVVFMLF). Over 164 to 208 (EVRHVPYKMRFALNNPQIHIAGLHRALKGVSHYLALKTLLSLWTG) the chain is Cytoplasmic. The helical transmembrane segment at 209–229 (VIVWLGLELMGVQFALMWAVL) threads the bilayer. At 230-234 (AFLLN) the chain is on the periplasmic side. Residues 235-255 (YVPNIGAVISAVPPMIQVLLF) traverse the membrane as a helical segment. Topologically, residues 256–257 (NG) are cytoplasmic. Residues 258–278 (VYECILVGALFLVVHMVIGNI) traverse the membrane as a helical segment. Residues 279–292 (LEPRMMGHRLGMST) are Periplasmic-facing. A helical membrane pass occupies residues 293–313 (MVVFLSLLIWGWLLGPVGMLL). Residues 314-349 (SVPLTSVCKIWMETTKGGSKLAILLGPGRPKSRLPG) are Cytoplasmic-facing.

This sequence belongs to the autoinducer-2 exporter (AI-2E) (TC 2.A.86) family.

Its subcellular location is the cell inner membrane. The sequence is that of Putative transport protein YhhT (yhhT) from Escherichia coli O157:H7.